Reading from the N-terminus, the 634-residue chain is Probable threonine--tRNA ligase, cytoplasmic (634 aa).

In terms of domain architecture, TGS spans 1–61; the sequence is MSIYVTFKGQ…NENQKIELYD (61 aa).

Belongs to the class-II aminoacyl-tRNA synthetase family.

It localises to the cytoplasm. It catalyses the reaction tRNA(Thr) + L-threonine + ATP = L-threonyl-tRNA(Thr) + AMP + diphosphate + H(+). This chain is Probable threonine--tRNA ligase, cytoplasmic, found in Enterocytozoon bieneusi (strain H348) (Microsporidian parasite).